A 430-amino-acid polypeptide reads, in one-letter code: UDP-N-acetylglucosamine 1-carboxyvinyltransferase 1 (430 aa).

22–23 serves as a coordination point for phosphoenolpyruvate; that stretch reads KN. Residue Arg-93 coordinates UDP-N-acetyl-alpha-D-glucosamine. Cys-117 serves as the catalytic Proton donor. Residue Cys-117 is modified to 2-(S-cysteinyl)pyruvic acid O-phosphothioketal. Residues 122 to 126, Asp-305, and Val-327 contribute to the UDP-N-acetyl-alpha-D-glucosamine site; that span reads RPVDL.

It belongs to the EPSP synthase family. MurA subfamily.

It localises to the cytoplasm. It carries out the reaction phosphoenolpyruvate + UDP-N-acetyl-alpha-D-glucosamine = UDP-N-acetyl-3-O-(1-carboxyvinyl)-alpha-D-glucosamine + phosphate. It participates in cell wall biogenesis; peptidoglycan biosynthesis. Its function is as follows. Cell wall formation. Adds enolpyruvyl to UDP-N-acetylglucosamine. In Listeria innocua serovar 6a (strain ATCC BAA-680 / CLIP 11262), this protein is UDP-N-acetylglucosamine 1-carboxyvinyltransferase 1.